Here is a 541-residue protein sequence, read N- to C-terminus: Probable inorganic phosphate transporter 1-8 (541 aa).

The Cytoplasmic portion of the chain corresponds to 1–28; the sequence is MARQEQQQHLQVLSALDAAKTQWYHFTA. Residues 29–49 form a helical membrane-spanning segment; it reads IVVAGMGFFTDAYDLFCISLV. Over 50 to 74 the chain is Extracellular; sequence TKLLGRIYYTDLAKENPGSLPPNVA. A helical transmembrane segment spans residues 75–95; that stretch reads AAVNGVAFCGTLAGQLFFGWL. The Cytoplasmic portion of the chain corresponds to 96-102; that stretch reads GDKLGRK. Residues 103-123 traverse the membrane as a helical segment; the sequence is SVYGMTLLMMVICSIASGLSF. Residues 124–126 are Extracellular-facing; that stretch reads SHT. Residues 127-147 form a helical membrane-spanning segment; sequence PTSVMATLCFFRFWLGFGIGG. Residues 148 to 168 lie on the Cytoplasmic side of the membrane; it reads DYPLSATIMSEYANKKTRGAF. The helical transmembrane segment at 169-189 threads the bilayer; that stretch reads IAAVFAMQGFGILAGGIVTLI. The Extracellular segment spans residues 190-215; the sequence is ISSAFRAGFPAPAYQDDRAGSTVRQA. The chain crosses the membrane as a helical span at residues 216–236; it reads DYVWRIILMLGAMPALLTYYW. At 237–297 the chain is on the cytoplasmic side; the sequence is RMKMPETARY…GLFSRQFARR (61 aa). Residues 298–318 form a helical membrane-spanning segment; the sequence is HGLHLVGTATTWFLLDIAFYS. Topologically, residues 319-353 are extracellular; the sequence is QNLFQKDIFTSINWIPKAKTMSALEEVFRIARAQT. Residues 354-374 traverse the membrane as a helical segment; the sequence is LIALCGTVPGYWFTVFLIDIV. Topologically, residues 375–376 are cytoplasmic; that stretch reads GR. A helical transmembrane segment spans residues 377 to 397; sequence FAIQLLGFFMMTVFMLGLAVP. Residues 398-404 lie on the Extracellular side of the membrane; it reads YHHWTTK. The helical transmembrane segment at 405–425 threads the bilayer; sequence GNHIGFVVMYAFTFFFANFGP. The Cytoplasmic segment spans residues 426–447; it reads NSTTFIVPAEIFPARLRSTCHG. Residues 448 to 468 form a helical membrane-spanning segment; it reads ISAAAGKAGAIIGSFGFLYAA. The Extracellular segment spans residues 469-486; sequence QDPHKPDAGYKPGIGVRN. Residues 487-507 traverse the membrane as a helical segment; the sequence is SLFVLAGCNLLGFICTFLVPE. Topologically, residues 508–541 are cytoplasmic; sequence SKGKSLEEMSGEAEDDDDEVAAAGGGAAVRPQTA. Positions 514 to 541 are disordered; it reads EEMSGEAEDDDDEVAAAGGGAAVRPQTA. Residues 516 to 527 are compositionally biased toward acidic residues; it reads MSGEAEDDDDEV.

It belongs to the major facilitator superfamily. Phosphate:H(+) symporter (TC 2.A.1.9) family.

It is found in the membrane. Its function is as follows. High-affinity transporter for external inorganic phosphate. The polypeptide is Probable inorganic phosphate transporter 1-8 (PHT1-8) (Oryza sativa subsp. japonica (Rice)).